A 220-amino-acid chain; its full sequence is Deoxyribose-phosphate aldolase (220 aa).

Aspartate 89 acts as the Proton donor/acceptor in catalysis. Lysine 151 acts as the Schiff-base intermediate with acetaldehyde in catalysis. Lysine 180 (proton donor/acceptor) is an active-site residue.

The protein belongs to the DeoC/FbaB aldolase family. DeoC type 1 subfamily.

Its subcellular location is the cytoplasm. It catalyses the reaction 2-deoxy-D-ribose 5-phosphate = D-glyceraldehyde 3-phosphate + acetaldehyde. Its pathway is carbohydrate degradation; 2-deoxy-D-ribose 1-phosphate degradation; D-glyceraldehyde 3-phosphate and acetaldehyde from 2-deoxy-alpha-D-ribose 1-phosphate: step 2/2. Functionally, catalyzes a reversible aldol reaction between acetaldehyde and D-glyceraldehyde 3-phosphate to generate 2-deoxy-D-ribose 5-phosphate. This is Deoxyribose-phosphate aldolase from Streptococcus pneumoniae (strain CGSP14).